The sequence spans 241 residues: Aspartate/glutamate leucyltransferase (241 aa).

Belongs to the R-transferase family. Bpt subfamily.

It is found in the cytoplasm. It carries out the reaction N-terminal L-glutamyl-[protein] + L-leucyl-tRNA(Leu) = N-terminal L-leucyl-L-glutamyl-[protein] + tRNA(Leu) + H(+). It catalyses the reaction N-terminal L-aspartyl-[protein] + L-leucyl-tRNA(Leu) = N-terminal L-leucyl-L-aspartyl-[protein] + tRNA(Leu) + H(+). Functions in the N-end rule pathway of protein degradation where it conjugates Leu from its aminoacyl-tRNA to the N-termini of proteins containing an N-terminal aspartate or glutamate. This is Aspartate/glutamate leucyltransferase from Parvibaculum lavamentivorans (strain DS-1 / DSM 13023 / NCIMB 13966).